A 349-amino-acid chain; its full sequence is Adenosine deaminase (349 aa).

Residues His-25 and His-27 each coordinate Zn(2+). Substrate-binding residues include His-27, Asp-29, and Gly-182. Residue His-209 participates in Zn(2+) binding. The active-site Proton donor is the Glu-212. Asp-289 is a binding site for Zn(2+).

This sequence belongs to the metallo-dependent hydrolases superfamily. Adenosine and AMP deaminases family. Adenosine deaminase subfamily. Requires Zn(2+) as cofactor.

The catalysed reaction is adenosine + H2O + H(+) = inosine + NH4(+). It catalyses the reaction 2'-deoxyadenosine + H2O + H(+) = 2'-deoxyinosine + NH4(+). In terms of biological role, catalyzes the hydrolytic deamination of adenosine and 2-deoxyadenosine. This is Adenosine deaminase from Streptococcus mutans serotype c (strain ATCC 700610 / UA159).